Consider the following 172-residue polypeptide: SsrA-binding protein (172 aa).

Belongs to the SmpB family.

It is found in the cytoplasm. In terms of biological role, required for rescue of stalled ribosomes mediated by trans-translation. Binds to transfer-messenger RNA (tmRNA), required for stable association of tmRNA with ribosomes. tmRNA and SmpB together mimic tRNA shape, replacing the anticodon stem-loop with SmpB. tmRNA is encoded by the ssrA gene; the 2 termini fold to resemble tRNA(Ala) and it encodes a 'tag peptide', a short internal open reading frame. During trans-translation Ala-aminoacylated tmRNA acts like a tRNA, entering the A-site of stalled ribosomes, displacing the stalled mRNA. The ribosome then switches to translate the ORF on the tmRNA; the nascent peptide is terminated with the 'tag peptide' encoded by the tmRNA and targeted for degradation. The ribosome is freed to recommence translation, which seems to be the essential function of trans-translation. The chain is SsrA-binding protein from Dehalococcoides mccartyi (strain ATCC BAA-2266 / KCTC 15142 / 195) (Dehalococcoides ethenogenes (strain 195)).